The following is a 142-amino-acid chain: Galectin-10 (142 aa).

N-acetylserine is present on S2. Residues 6 to 138 (VPYTEAASLS…DISLTKFNVS (133 aa)) enclose the Galectin domain.

As to quaternary structure, interacts with CEL. As to expression, expressed abundantly in the bone marrow. Expressed exclusively by eosinophils and basophils. Not detected in monocytes and neutrophils. Expressed in CD25-positive regulatory T-cells (Treg) (at protein level). Found in intestinal tissue from patients with Celiac disease, expression is directly related to the histological grade of mucosal damage and to the number of eosinophils found in the duodenal lesion (at protein level). Found in sputum of patients with eosinophilic inflammatory diseases such as asthma (at protein level).

The protein localises to the cytoplasm. The protein resides in the cytosol. It is found in the cytoplasmic granule. Functionally, regulates immune responses through the recognition of cell-surface glycans. Essential for the anergy and suppressive function of CD25-positive regulatory T-cells (Treg). The protein is Galectin-10 (CLC) of Homo sapiens (Human).